The sequence spans 364 residues: Alanine racemase (364 aa).

The Proton acceptor; specific for D-alanine role is filled by lysine 35. Position 35 is an N6-(pyridoxal phosphate)lysine (lysine 35). Residue arginine 131 participates in substrate binding. Catalysis depends on tyrosine 256, which acts as the Proton acceptor; specific for L-alanine. Methionine 304 serves as a coordination point for substrate.

The protein belongs to the alanine racemase family. It depends on pyridoxal 5'-phosphate as a cofactor.

It carries out the reaction L-alanine = D-alanine. It participates in amino-acid biosynthesis; D-alanine biosynthesis; D-alanine from L-alanine: step 1/1. Functionally, catalyzes the interconversion of L-alanine and D-alanine. May also act on other amino acids. The protein is Alanine racemase (alr) of Halorhodospira halophila (strain DSM 244 / SL1) (Ectothiorhodospira halophila (strain DSM 244 / SL1)).